Here is a 340-residue protein sequence, read N- to C-terminus: N-acetyl-gamma-glutamyl-phosphate reductase (340 aa).

The active site involves Cys146.

Belongs to the NAGSA dehydrogenase family. Type 1 subfamily.

It localises to the cytoplasm. It catalyses the reaction N-acetyl-L-glutamate 5-semialdehyde + phosphate + NADP(+) = N-acetyl-L-glutamyl 5-phosphate + NADPH + H(+). It functions in the pathway amino-acid biosynthesis; L-arginine biosynthesis; N(2)-acetyl-L-ornithine from L-glutamate: step 3/4. Catalyzes the NADPH-dependent reduction of N-acetyl-5-glutamyl phosphate to yield N-acetyl-L-glutamate 5-semialdehyde. In Rubrobacter xylanophilus (strain DSM 9941 / JCM 11954 / NBRC 16129 / PRD-1), this protein is N-acetyl-gamma-glutamyl-phosphate reductase.